Reading from the N-terminus, the 470-residue chain is Mitogen-activated protein kinase 15 (470 aa).

The Protein kinase domain occupies 13–306; it reads FDLQKRLGKG…VEQCLVHPYV (294 aa). ATP contacts are provided by residues 19–27 and Lys42; that span reads LGKGAYGIV. Residue Asp137 is the Proton acceptor of the active site. Residue Thr178 is modified to Phosphothreonine. The TXY motif lies at 178 to 180; the sequence is TEY. The residue at position 180 (Tyr180) is a Phosphotyrosine. The interval 362-445 is disordered; sequence PYGEDKSRAP…PSSIKQRRRS (84 aa). Positions 394-406 are enriched in low complexity; that stretch reads MDKNNSSSHDSSS. Residues 409 to 426 are compositionally biased toward basic and acidic residues; sequence LRERAASAESRTSKDSNG.

The protein belongs to the protein kinase superfamily. CMGC Ser/Thr protein kinase family. MAP kinase subfamily. The cofactor is Mg(2+). Post-translationally, dually phosphorylated on Thr-178 and Tyr-180, which activates the enzyme. As to expression, expressed in the URX neuron and in many other head sensory neurons. Isoform a: Expressed in head and tail ciliated sensory neurons, and in mid-body neurons. Isoform c: Expressed in head and tail ciliated sensory neurons, and in mid-body neurons.

Its subcellular location is the cell projection. The protein resides in the cilium. It is found in the cilium membrane. The protein localises to the cytoplasm. It localises to the cytoskeleton. Its subcellular location is the cilium axoneme. The protein resides in the cilium basal body. It is found in the cell junction. The protein localises to the perikaryon. It localises to the dendrite. It carries out the reaction L-seryl-[protein] + ATP = O-phospho-L-seryl-[protein] + ADP + H(+). It catalyses the reaction L-threonyl-[protein] + ATP = O-phospho-L-threonyl-[protein] + ADP + H(+). Its activity is regulated as follows. Activated by threonine and tyrosine phosphorylation. Atypical MAPK protein. Regulates primary cilium formation in sensory neurons and the localization of ciliary proteins involved in cilium structure, transport, and signaling. Acts in dopamine (DA) neurons to support synaptic membrane dat-1 availability via activation of rho-1 thereby sustaining normal levels of DA clearance. Plays a role in male mating behavior, probably in part through regulating the localization of the polycystin pkd-2. Functions postembryonically in the URX sensory neurons to constrain URX dendrite growth throughout lifetime, probably by restricting expansion of the subcellular sensory compartment at the dendrite ending. The polypeptide is Mitogen-activated protein kinase 15 (Caenorhabditis elegans).